A 22-amino-acid chain; its full sequence is Unknown protein 10 (22 aa).

In Pseudotsuga menziesii (Douglas-fir), this protein is Unknown protein 10.